A 556-amino-acid polypeptide reads, in one-letter code: Formate--tetrahydrofolate ligase (556 aa).

ATP is bound at residue 65-72 (TPAGEGKT).

This sequence belongs to the formate--tetrahydrofolate ligase family.

It carries out the reaction (6S)-5,6,7,8-tetrahydrofolate + formate + ATP = (6R)-10-formyltetrahydrofolate + ADP + phosphate. Its pathway is one-carbon metabolism; tetrahydrofolate interconversion. The protein is Formate--tetrahydrofolate ligase of Agathobacter rectalis (strain ATCC 33656 / DSM 3377 / JCM 17463 / KCTC 5835 / VPI 0990) (Eubacterium rectale).